A 258-amino-acid chain; its full sequence is UPF0246 protein YE0603 (258 aa).

Belongs to the UPF0246 family.

This is UPF0246 protein YE0603 from Yersinia enterocolitica serotype O:8 / biotype 1B (strain NCTC 13174 / 8081).